A 443-amino-acid polypeptide reads, in one-letter code: Xaa-Pro dipeptidase (443 aa).

Mn(2+)-binding residues include Asp-246, Asp-257, His-339, Glu-384, and Glu-423.

The protein belongs to the peptidase M24B family. Bacterial-type prolidase subfamily. The cofactor is Mn(2+).

The catalysed reaction is Xaa-L-Pro dipeptide + H2O = an L-alpha-amino acid + L-proline. Splits dipeptides with a prolyl residue in the C-terminal position. This is Xaa-Pro dipeptidase from Escherichia coli O7:K1 (strain IAI39 / ExPEC).